The primary structure comprises 332 residues: Ketol-acid reductoisomerase (NADP(+)) (332 aa).

Residues 1–182 (MAVIYYDKDC…GSNRAGVLET (182 aa)) enclose the KARI N-terminal Rossmann domain. NADP(+) contacts are provided by residues 25-28 (YGAQ) and 83-86 (DTSQ). Residue His108 is part of the active site. Gly134 is a binding site for NADP(+). Positions 183 to 328 (TFAEETETDL…AELRSMMSWL (146 aa)) constitute a KARI C-terminal knotted domain. Positions 191, 195, 227, and 231 each coordinate Mg(2+). Ser252 is a binding site for substrate.

It belongs to the ketol-acid reductoisomerase family. Mg(2+) serves as cofactor.

The catalysed reaction is (2R)-2,3-dihydroxy-3-methylbutanoate + NADP(+) = (2S)-2-acetolactate + NADPH + H(+). The enzyme catalyses (2R,3R)-2,3-dihydroxy-3-methylpentanoate + NADP(+) = (S)-2-ethyl-2-hydroxy-3-oxobutanoate + NADPH + H(+). Its pathway is amino-acid biosynthesis; L-isoleucine biosynthesis; L-isoleucine from 2-oxobutanoate: step 2/4. It participates in amino-acid biosynthesis; L-valine biosynthesis; L-valine from pyruvate: step 2/4. Functionally, involved in the biosynthesis of branched-chain amino acids (BCAA). Catalyzes an alkyl-migration followed by a ketol-acid reduction of (S)-2-acetolactate (S2AL) to yield (R)-2,3-dihydroxy-isovalerate. In the isomerase reaction, S2AL is rearranged via a Mg-dependent methyl migration to produce 3-hydroxy-3-methyl-2-ketobutyrate (HMKB). In the reductase reaction, this 2-ketoacid undergoes a metal-dependent reduction by NADPH to yield (R)-2,3-dihydroxy-isovalerate. This is Ketol-acid reductoisomerase (NADP(+)) from Dehalococcoides mccartyi (strain ATCC BAA-2266 / KCTC 15142 / 195) (Dehalococcoides ethenogenes (strain 195)).